The following is a 345-amino-acid chain: S-adenosylmethionine:tRNA ribosyltransferase-isomerase (345 aa).

It belongs to the QueA family. In terms of assembly, monomer.

It is found in the cytoplasm. It carries out the reaction 7-aminomethyl-7-carbaguanosine(34) in tRNA + S-adenosyl-L-methionine = epoxyqueuosine(34) in tRNA + adenine + L-methionine + 2 H(+). Its pathway is tRNA modification; tRNA-queuosine biosynthesis. Functionally, transfers and isomerizes the ribose moiety from AdoMet to the 7-aminomethyl group of 7-deazaguanine (preQ1-tRNA) to give epoxyqueuosine (oQ-tRNA). The protein is S-adenosylmethionine:tRNA ribosyltransferase-isomerase of Shewanella pealeana (strain ATCC 700345 / ANG-SQ1).